The following is a 303-amino-acid chain: CDAN1-interacting nuclease 1 (303 aa).

Its subcellular location is the nucleus. The protein localises to the cytoplasm. Functionally, may play a role in erythroid cell differentiation. In Xenopus laevis (African clawed frog), this protein is CDAN1-interacting nuclease 1.